The primary structure comprises 400 residues: GTPase Obg (400 aa).

An Obg domain is found at 1 to 159; the sequence is MKFVDEVQIR…RTLKLELLLL (159 aa). In terms of domain architecture, OBG-type G spans 160–333; the sequence is ADVGMLGLPN…VCYDILDLLD (174 aa). GTP-binding positions include 166–173, 191–195, 213–216, 283–286, and 314–316; these read GLPNAGKS, FTTLV, DIPG, NKMD, and SAI. Mg(2+) is bound by residues Ser-173 and Thr-193.

It belongs to the TRAFAC class OBG-HflX-like GTPase superfamily. OBG GTPase family. Monomer. Mg(2+) is required as a cofactor.

It is found in the cytoplasm. In terms of biological role, an essential GTPase which binds GTP, GDP and possibly (p)ppGpp with moderate affinity, with high nucleotide exchange rates and a fairly low GTP hydrolysis rate. Plays a role in control of the cell cycle, stress response, ribosome biogenesis and in those bacteria that undergo differentiation, in morphogenesis control. The chain is GTPase Obg from Aeromonas salmonicida (strain A449).